We begin with the raw amino-acid sequence, 30 residues long: uncharacterized protein (30 aa).

An N-terminal signal peptide occupies residues 1 to 22; sequence MRFLFFLPPSFITSFLYLALYS.

This is an uncharacterized protein from Schizosaccharomyces pombe (strain 972 / ATCC 24843) (Fission yeast).